The sequence spans 550 residues: Transcriptional repressor RHIT (550 aa).

Disordered stretches follow at residues 1-67, 174-200, and 216-296; these read MSAD…ETRA, VQGK…VVEV, and KSFK…EGLA. 3 stretches are compositionally biased toward basic and acidic residues: residues 11-22, 45-58, and 187-200; these read AQDKERARETPG, ESPH…EPHP, and LGHE…VVEV. A KRAB domain is found at 124–193; that stretch reads VTFEDMALYL…SRQLGHEEEE (70 aa). A Glycyl lysine isopeptide (Lys-Gly) (interchain with G-Cter in SUMO2) cross-link involves residue Lys-216. Basic and acidic residues predominate over residues 267 to 281; that stretch reads DLPKTQEGHFPEQPR. Position 290 is a phosphoserine (Ser-290). 8 C2H2-type zinc fingers span residues 306 to 328, 334 to 356, 362 to 384, 390 to 412, 418 to 440, 446 to 468, 474 to 496, and 502 to 524; these read YKCE…RRTH, YACT…QIIH, YTCP…QRIH, YVCD…QGTH, HKCP…QRTH, YPCP…NRTH, YHCL…QRTH, and YSCP…EKIH.

This sequence belongs to the krueppel C2H2-type zinc-finger protein family.

Its subcellular location is the nucleus. In terms of biological role, transcriptional repressor involved in regulating MPV17L expression. By regulating MPV17L expression, contributes to the regulation of genes involved in H(2)O(2) metabolism and the mitochondrial apoptotic cascade. The sequence is that of Transcriptional repressor RHIT (ZNF205) from Bos taurus (Bovine).